The primary structure comprises 377 residues: Geranylgeranyl transferase type-1 subunit beta (377 aa).

PFTB repeat units follow at residues 144-186 (KEAC…YMLN), 193-234 (MKKA…CLMG), 245-284 (LNRI…KLLK), and 291-333 (FEKN…SLME). Geranylgeranyl diphosphate-binding positions include 219–221 (HGG) and 263–266 (RPNK). Residues D269 and C271 each contribute to the Zn(2+) site. Position 272-275 (272-275 (YSFW)) interacts with geranylgeranyl diphosphate. H321 lines the Zn(2+) pocket.

The protein belongs to the protein prenyltransferase subunit beta family. Heterodimer of FNTA and PGGT1B. PGGT1B mediates interaction with substrate peptides. Zn(2+) serves as cofactor. The cofactor is Mg(2+).

The enzyme catalyses geranylgeranyl diphosphate + L-cysteinyl-[protein] = S-geranylgeranyl-L-cysteinyl-[protein] + diphosphate. Its function is as follows. Catalyzes the transfer of a geranyl-geranyl moiety from geranyl-geranyl pyrophosphate to a cysteine at the fourth position from the C-terminus of proteins having the C-terminal sequence Cys-aliphatic-aliphatic-X. Known substrates include RAC1, RAC2, RAP1A and RAP1B. In Bos taurus (Bovine), this protein is Geranylgeranyl transferase type-1 subunit beta (PGGT1B).